The chain runs to 118 residues: Developmental pluripotency-associated protein 5A (118 aa).

In terms of domain architecture, KH; atypical spans 24–86; it reads PEVFQVQSLV…NNKIRAKWML (63 aa).

It belongs to the KHDC1 family.

It is found in the cytoplasm. Involved in the maintenance of embryonic stem (ES) cell pluripotency. Dispensable for self-renewal of pluripotent ES cells and establishment of germ cells. Associates with specific target mRNAs. The sequence is that of Developmental pluripotency-associated protein 5A (Dppa5a) from Mus musculus (Mouse).